We begin with the raw amino-acid sequence, 285 residues long: 1,4-dihydroxy-2-naphthoyl-CoA synthase (285 aa).

Substrate contacts are provided by residues R45, 84–88 (SGGDQ), Y97, 129–133 (YAIGG), T155, S161, Y258, and K273. 154–156 (QTG) contributes to the hydrogencarbonate binding site.

Belongs to the enoyl-CoA hydratase/isomerase family. MenB subfamily. Hydrogencarbonate is required as a cofactor.

The catalysed reaction is 2-succinylbenzoyl-CoA + H(+) = 1,4-dihydroxy-2-naphthoyl-CoA + H2O. It functions in the pathway quinol/quinone metabolism; 1,4-dihydroxy-2-naphthoate biosynthesis; 1,4-dihydroxy-2-naphthoate from chorismate: step 6/7. Its pathway is quinol/quinone metabolism; menaquinone biosynthesis. Converts o-succinylbenzoyl-CoA (OSB-CoA) to 1,4-dihydroxy-2-naphthoyl-CoA (DHNA-CoA). The protein is 1,4-dihydroxy-2-naphthoyl-CoA synthase of Haemophilus influenzae (strain ATCC 51907 / DSM 11121 / KW20 / Rd).